Here is an 819-residue protein sequence, read N- to C-terminus: Cadherin-24 (819 aa).

The N-terminal stretch at 1-19 is a signal peptide; it reads MWGLVRLLLAWLGGWGCMG. Positions 21–44 are excised as a propeptide; the sequence is LAAPARAWAGSREHPGPALLRTRR. Residues 45–641 lie on the Extracellular side of the membrane; that stretch reads SWVWNQFFVI…LSAAGLSTGA (597 aa). Cadherin domains are found at residues 46-150, 151-259, 260-374, 375-517, and 517-630; these read WVWN…PPIF, PLGP…PPKF, PQSL…PPAF, TQAA…APQL, and LAEP…WPEA. Residues Asn446, Asn548, and Asn563 are each glycosylated (N-linked (GlcNAc...) asparagine). Residues 642–662 traverse the membrane as a helical segment; the sequence is LLAIITCVGALLALVVLFVAL. At 663-819 the chain is on the cytoplasmic side; it reads RRQKQEALMV…LYGAKEPPAP (157 aa). Positions 768 to 800 are disordered; that stretch reads YEGRGSSCGSLSSLGSGSEAGGAPGPAEPLDDW. The span at 771–784 shows a compositional bias: low complexity; sequence RGSSCGSLSSLGSG.

Associates with alpha-, beta- and delta-catenins.

Its subcellular location is the cell membrane. In terms of biological role, cadherins are calcium-dependent cell adhesion proteins. They preferentially interact with themselves in a homophilic manner in connecting cells; cadherins may thus contribute to the sorting of heterogeneous cell types. Cadherin-24 mediate strong cell-cell adhesion. This is Cadherin-24 (CDH24) from Homo sapiens (Human).